A 246-amino-acid polypeptide reads, in one-letter code: tRNA (guanine-N(7)-)-methyltransferase (246 aa).

A disordered region spans residues 1-23 (MIESSSPTPPALHEGAPADVSHP). S-adenosyl-L-methionine is bound by residues glutamate 75, glutamate 100, aspartate 127, and aspartate 150. Aspartate 150 is an active-site residue. Lysine 154 contacts substrate. The interval 156 to 161 (KHNKRR) is interaction with RNA. Residues aspartate 186 and 225–228 (TKFE) each bind substrate.

It belongs to the class I-like SAM-binding methyltransferase superfamily. TrmB family.

It catalyses the reaction guanosine(46) in tRNA + S-adenosyl-L-methionine = N(7)-methylguanosine(46) in tRNA + S-adenosyl-L-homocysteine. It participates in tRNA modification; N(7)-methylguanine-tRNA biosynthesis. Its function is as follows. Catalyzes the formation of N(7)-methylguanine at position 46 (m7G46) in tRNA. This chain is tRNA (guanine-N(7)-)-methyltransferase, found in Polaromonas naphthalenivorans (strain CJ2).